Here is a 375-residue protein sequence, read N- to C-terminus: Alcohol dehydrogenase class-3 chain H (375 aa).

Position 1 is an N-acetylalanine (alanine 1). Zn(2+)-binding residues include cysteine 46, histidine 68, cysteine 98, cysteine 101, cysteine 104, cysteine 112, and cysteine 175.

It belongs to the zinc-containing alcohol dehydrogenase family. Class-III subfamily. As to quaternary structure, homodimer or heterodimer with L chain. Requires Zn(2+) as cofactor.

It localises to the cytoplasm. It catalyses the reaction a primary alcohol + NAD(+) = an aldehyde + NADH + H(+). The enzyme catalyses a secondary alcohol + NAD(+) = a ketone + NADH + H(+). It carries out the reaction S-(hydroxymethyl)glutathione + NADP(+) = S-formylglutathione + NADPH + H(+). The catalysed reaction is S-(hydroxymethyl)glutathione + NAD(+) = S-formylglutathione + NADH + H(+). Class-III ADH is remarkably ineffective in oxidizing ethanol, but it readily catalyzes the oxidation of long-chain primary alcohols and the oxidation of S-(hydroxymethyl) glutathione. This chain is Alcohol dehydrogenase class-3 chain H, found in Gadus morhua (Atlantic cod).